The primary structure comprises 215 residues: Cytochrome b6 (215 aa).

Residues 32–52 (IFYCLGGITLTCFLVQVATGF) form a helical membrane-spanning segment. Cysteine 35 contacts heme c. Residues histidine 86 and histidine 100 each coordinate heme b. Transmembrane regions (helical) follow at residues 90–110 (ASMM…TGGF), 116–136 (LTWV…VTGY), and 186–206 (LHTF…FPMI). Residues histidine 187 and histidine 202 each coordinate heme b.

The protein belongs to the cytochrome b family. PetB subfamily. As to quaternary structure, the 4 large subunits of the cytochrome b6-f complex are cytochrome b6, subunit IV (17 kDa polypeptide, PetD), cytochrome f and the Rieske protein, while the 4 small subunits are PetG, PetL, PetM and PetN. The complex functions as a dimer. Requires heme b as cofactor. It depends on heme c as a cofactor.

Its subcellular location is the plastid. It is found in the chloroplast thylakoid membrane. Functionally, component of the cytochrome b6-f complex, which mediates electron transfer between photosystem II (PSII) and photosystem I (PSI), cyclic electron flow around PSI, and state transitions. In Populus alba (White poplar), this protein is Cytochrome b6.